Reading from the N-terminus, the 156-residue chain is Ribosome maturation factor RimP (156 aa).

Belongs to the RimP family.

It is found in the cytoplasm. Functionally, required for maturation of 30S ribosomal subunits. The chain is Ribosome maturation factor RimP from Oceanobacillus iheyensis (strain DSM 14371 / CIP 107618 / JCM 11309 / KCTC 3954 / HTE831).